We begin with the raw amino-acid sequence, 608 residues long: 1-deoxy-D-xylulose-5-phosphate synthase (608 aa).

Residues His66 and 107-109 (GHA) each bind thiamine diphosphate. Asp138 contacts Mg(2+). Thiamine diphosphate contacts are provided by residues 139 to 140 (GA), Asn167, Phe277, and Glu350. Position 167 (Asn167) interacts with Mg(2+).

Belongs to the transketolase family. DXPS subfamily. Homodimer. Requires Mg(2+) as cofactor. It depends on thiamine diphosphate as a cofactor.

It catalyses the reaction D-glyceraldehyde 3-phosphate + pyruvate + H(+) = 1-deoxy-D-xylulose 5-phosphate + CO2. The protein operates within metabolic intermediate biosynthesis; 1-deoxy-D-xylulose 5-phosphate biosynthesis; 1-deoxy-D-xylulose 5-phosphate from D-glyceraldehyde 3-phosphate and pyruvate: step 1/1. Functionally, catalyzes the acyloin condensation reaction between C atoms 2 and 3 of pyruvate and glyceraldehyde 3-phosphate to yield 1-deoxy-D-xylulose-5-phosphate (DXP). The protein is 1-deoxy-D-xylulose-5-phosphate synthase of Thermotoga maritima (strain ATCC 43589 / DSM 3109 / JCM 10099 / NBRC 100826 / MSB8).